The chain runs to 338 residues: MVLGVVGISYREAALKEREAAINILKDFEANTLFSQRFFGGEGSFVLLLTCHRAEIYYFSKSNHNVQSELLSRISALGARPYCYQGLACFTHLFTVTSGMDSLISGETEIQGQVKRAYIKAKTDRELPFALHFLFQKALKEGKDFRSQVSLSHPVVTIESVVEQTLDLHGKSTKDKLLFIGYSDINRKVANGLSAKGYRNLIFCSRKNISIPYATVARSQLSFREPYDVIFFGSSESAKDFPGLSLENLASISNRVIFDFNVPRTFTLMERPKDIVCLDMDFISEQVQKKLQISKQCTNKEKPFLALAARKQWEVYEKKCSHISSSQLQTSRPKLLIL.

Residues Thr-50–Arg-53, Ser-102, Glu-107–Glu-109, and Gln-113 each bind substrate. The Nucleophile role is filled by Cys-51. Gly-181–Asn-186 lines the NADP(+) pocket.

The protein belongs to the glutamyl-tRNA reductase family. As to quaternary structure, homodimer.

The catalysed reaction is (S)-4-amino-5-oxopentanoate + tRNA(Glu) + NADP(+) = L-glutamyl-tRNA(Glu) + NADPH + H(+). The protein operates within porphyrin-containing compound metabolism; protoporphyrin-IX biosynthesis; 5-aminolevulinate from L-glutamyl-tRNA(Glu): step 1/2. Functionally, catalyzes the NADPH-dependent reduction of glutamyl-tRNA(Glu) to glutamate 1-semialdehyde (GSA). The chain is Glutamyl-tRNA reductase from Chlamydia caviae (strain ATCC VR-813 / DSM 19441 / 03DC25 / GPIC) (Chlamydophila caviae).